Consider the following 505-residue polypeptide: Glutamate--cysteine ligase (505 aa).

Belongs to the glutamate--cysteine ligase type 1 family. Type 1 subfamily.

The enzyme catalyses L-cysteine + L-glutamate + ATP = gamma-L-glutamyl-L-cysteine + ADP + phosphate + H(+). Its pathway is sulfur metabolism; glutathione biosynthesis; glutathione from L-cysteine and L-glutamate: step 1/2. The protein is Glutamate--cysteine ligase of Wigglesworthia glossinidia brevipalpis.